Reading from the N-terminus, the 361-residue chain is Flagellar P-ring protein (361 aa).

The N-terminal stretch at 1-18 is a signal peptide; sequence MRKFTILLMLLLASSAQA.

The protein belongs to the FlgI family. In terms of assembly, the basal body constitutes a major portion of the flagellar organelle and consists of four rings (L,P,S, and M) mounted on a central rod.

It is found in the periplasm. It localises to the bacterial flagellum basal body. Its function is as follows. Assembles around the rod to form the L-ring and probably protects the motor/basal body from shearing forces during rotation. The polypeptide is Flagellar P-ring protein (Vibrio cholerae serotype O1 (strain ATCC 39541 / Classical Ogawa 395 / O395)).